The sequence spans 39 residues: Photosystem II reaction center protein L (39 aa).

Residues Ser-18 to Phe-38 form a helical membrane-spanning segment.

Belongs to the PsbL family. PSII is composed of 1 copy each of membrane proteins PsbA, PsbB, PsbC, PsbD, PsbE, PsbF, PsbH, PsbI, PsbJ, PsbK, PsbL, PsbM, PsbT, PsbX, PsbY, PsbZ, Psb30/Ycf12, peripheral proteins PsbO, CyanoQ (PsbQ), PsbU, PsbV and a large number of cofactors. It forms dimeric complexes.

It localises to the cellular thylakoid membrane. Functionally, one of the components of the core complex of photosystem II (PSII). PSII is a light-driven water:plastoquinone oxidoreductase that uses light energy to abstract electrons from H(2)O, generating O(2) and a proton gradient subsequently used for ATP formation. It consists of a core antenna complex that captures photons, and an electron transfer chain that converts photonic excitation into a charge separation. This subunit is found at the monomer-monomer interface and is required for correct PSII assembly and/or dimerization. The polypeptide is Photosystem II reaction center protein L (Crocosphaera subtropica (strain ATCC 51142 / BH68) (Cyanothece sp. (strain ATCC 51142))).